We begin with the raw amino-acid sequence, 692 residues long: Elongation factor G (692 aa).

Residues 8–283 enclose the tr-type G domain; the sequence is NRIRNIGIAA…AVIDYLPAPT (276 aa). Residues 17-24, 81-85, and 135-138 each bind GTP; these read AHIDAGKT, DTPGH, and NKMD.

It belongs to the TRAFAC class translation factor GTPase superfamily. Classic translation factor GTPase family. EF-G/EF-2 subfamily.

The protein localises to the cytoplasm. Its function is as follows. Catalyzes the GTP-dependent ribosomal translocation step during translation elongation. During this step, the ribosome changes from the pre-translocational (PRE) to the post-translocational (POST) state as the newly formed A-site-bound peptidyl-tRNA and P-site-bound deacylated tRNA move to the P and E sites, respectively. Catalyzes the coordinated movement of the two tRNA molecules, the mRNA and conformational changes in the ribosome. The sequence is that of Elongation factor G from Helicobacter acinonychis (strain Sheeba).